The sequence spans 122 residues: Fluoride-specific ion channel FluC 2 (122 aa).

Helical transmembrane passes span 3–23 (ITAI…RMFI), 38–58 (TSIV…LNLT), 62–82 (LLLL…SFIY), and 93–113 (FMHL…CFYL). Positions 72 and 75 each coordinate Na(+).

The protein belongs to the fluoride channel Fluc/FEX (TC 1.A.43) family.

Its subcellular location is the cell inner membrane. The enzyme catalyses fluoride(in) = fluoride(out). Its activity is regulated as follows. Na(+) is not transported, but it plays an essential structural role and its presence is essential for fluoride channel function. Functionally, fluoride-specific ion channel. Important for reducing fluoride concentration in the cell, thus reducing its toxicity. This Prochlorococcus marinus (strain MIT 9312) protein is Fluoride-specific ion channel FluC 2.